We begin with the raw amino-acid sequence, 142 residues long: Transcription antitermination protein NusB (142 aa).

Belongs to the NusB family.

In terms of biological role, involved in transcription antitermination. Required for transcription of ribosomal RNA (rRNA) genes. Binds specifically to the boxA antiterminator sequence of the ribosomal RNA (rrn) operons. The chain is Transcription antitermination protein NusB from Streptococcus mutans serotype c (strain ATCC 700610 / UA159).